We begin with the raw amino-acid sequence, 815 residues long: MAHTVQTLSKLLKKTPDEVITILANAGVDGKNSDSAISAEERKILMSSLSKRSSSKSSMFSFSKTGIKSSANSASGAKVQVKKKRLTKSATATDEQPEIAVNEVAQAVQVALDAGRDADKKLLAQDAKRLEMVRLQKTQAEVLKAQKKTVKQAQAQEIEKKAEKPKMIDKFKEDKKPKRLRNTLNGNNTRRQLHVARHNPNRKLKKKDRTRLSQKVQEEQAQHAFQKPIEKVVHEIAIAENIKVTELAQKMATKAGEVLKVLMGMGVMATLNDVIDQDTAMLVVEEMGHKSIASVEETVEDVLIEQLKSSGNEKARPPVVTIMGHVDHGKTSLLDYIRQAKVTHGEAGGITQHIGAYQVQSNGNTITFIDTPGHAAFSKMRSRSANATDIVILVVAADDGVMPQTIESIKHVQTAGVPMIVAINKIDKEGIDIDKIKQVLSTHNVISEDWGGDVMMIPVSAYTGEGVDALLDAISLTAEVLEFSAVIKALARGTVLEARLEKGRGKVTTILVQSGTLNKGDIMIAGFEYGKVKQIVDDKGKVLKSATPSMPVEVLGLSGVPNSGDEVLVVDSERKAREVADFRKAKNREAQLQKQQASKMENFLMKMEESNVSTVNVLLKADVRGSAQALIEALEGLSTDEAKVKVVSSGVGGINNTDITLAATSNALVLGFNVRADAVARKTADNEGVRIEYYSIIYNLIDDVKTIMSGLLSPELSENIIGIASVKSVFRSQKMGDIAGCMVEEGVVRRDSLIRVLRDSVVIFEGWLESLRRFKDNVNEVKSGTECGIGVLNYTDIQPGDQIEVFERIERIRTL.

Positions 315–482 (ARPPVVTIMG…AISLTAEVLE (168 aa)) constitute a tr-type G domain. Residues 324 to 331 (GHVDHGKT) are G1. 324-331 (GHVDHGKT) serves as a coordination point for GTP. Positions 349 to 353 (GITQH) are G2. Residues 370-373 (DTPG) form a G3 region. Residues 370–374 (DTPGH) and 424–427 (NKID) contribute to the GTP site. The interval 424–427 (NKID) is G4. Positions 460–462 (SAY) are G5.

The protein belongs to the TRAFAC class translation factor GTPase superfamily. Classic translation factor GTPase family. IF-2 subfamily.

The protein localises to the cytoplasm. In terms of biological role, one of the essential components for the initiation of protein synthesis. Protects formylmethionyl-tRNA from spontaneous hydrolysis and promotes its binding to the 30S ribosomal subunits. Also involved in the hydrolysis of GTP during the formation of the 70S ribosomal complex. The sequence is that of Translation initiation factor IF-2 from Ruthia magnifica subsp. Calyptogena magnifica.